Reading from the N-terminus, the 474-residue chain is F420-non-reducing hydrogenase vhc subunit A (474 aa).

Ni(2+) contacts are provided by C61, C64, C445, and C448.

The protein belongs to the [NiFe]/[NiFeSe] hydrogenase large subunit family. The F420-non-reducing hydrogenase vhc is composed of three subunits; VhcA, VhcD and VhcG. Requires Ni(2+) as cofactor.

In Methanococcus voltae, this protein is F420-non-reducing hydrogenase vhc subunit A (vhcA).